Here is a 262-residue protein sequence, read N- to C-terminus: Enoyl-[acyl-carrier-protein] reductase [NADH] FabI (262 aa).

NAD(+) contacts are provided by residues G13, 19-20, Q40, 64-65, and I92; these read SI and DV. A95 contacts substrate. Catalysis depends on proton acceptor residues Y146 and Y156. NAD(+)-binding positions include K163 and 192–196; that span reads IRTLA.

The protein belongs to the short-chain dehydrogenases/reductases (SDR) family. FabI subfamily. Homotetramer.

The enzyme catalyses a 2,3-saturated acyl-[ACP] + NAD(+) = a (2E)-enoyl-[ACP] + NADH + H(+). It catalyses the reaction (2E)-butenoyl-[ACP] + NADH + H(+) = butanoyl-[ACP] + NAD(+). The catalysed reaction is (2E)-decenoyl-[ACP] + NADH + H(+) = decanoyl-[ACP] + NAD(+). It carries out the reaction (2E)-hexadecenoyl-[ACP] + NADH + H(+) = hexadecanoyl-[ACP] + NAD(+). The enzyme catalyses (2E,9Z)-hexadecadienoyl-[ACP] + NADH + H(+) = (9Z)-hexadecenoyl-[ACP] + NAD(+). It catalyses the reaction (2E)-5-methylhexenoyl-[ACP] + NADH + H(+) = 5-methylhexanoyl-[ACP] + NAD(+). The protein operates within lipid metabolism; fatty acid biosynthesis. It functions in the pathway cofactor biosynthesis; biotin biosynthesis. Inhibited by diazaborines, triclosan (5-chloro-2-2,4-dichlorophenoxyphenol), 1,4-disubstituted imidazoles, 1,4-benzodiazepine derivatives, naphthyridinone derivatives, luteolin and curcumin. The antibiotic diazaborine interferes with the activity by binding to the protein and NAD. Catalyzes the reduction of a carbon-carbon double bond in an enoyl moiety that is covalently linked to an acyl carrier protein (ACP). Involved in the elongation cycle of fatty acid which are used in the lipid metabolism and in the biotin biosynthesis. This Escherichia coli (strain K12) protein is Enoyl-[acyl-carrier-protein] reductase [NADH] FabI (fabI).